Reading from the N-terminus, the 208-residue chain is Small ribosomal subunit protein uS4 (208 aa).

The S4 RNA-binding domain maps to 98 to 158; the sequence is RRLDNVVYRL…EKNRKISVVA (61 aa).

The protein belongs to the universal ribosomal protein uS4 family. Part of the 30S ribosomal subunit. Contacts protein S5. The interaction surface between S4 and S5 is involved in control of translational fidelity.

In terms of biological role, one of the primary rRNA binding proteins, it binds directly to 16S rRNA where it nucleates assembly of the body of the 30S subunit. Its function is as follows. With S5 and S12 plays an important role in translational accuracy. The sequence is that of Small ribosomal subunit protein uS4 from Lawsonia intracellularis (strain PHE/MN1-00).